The following is a 92-amino-acid chain: Major allergen I polypeptide chain 1 (92 aa).

A signal peptide spans 1–22; the sequence is MKGACVLVLLWAALLLISGGNC.

Belongs to the secretoglobin family. In terms of assembly, heterotetramer composed of two non-covalently linked disulfide-linked heterodimer of chains 1 and 2. Saliva and sebaceous glands.

The protein localises to the secreted. This chain is Major allergen I polypeptide chain 1 (CH1), found in Felis catus (Cat).